A 66-amino-acid polypeptide reads, in one-letter code: Hirudin-PA (66 aa).

The segment at 1-3 (ITY) is interaction with thrombin active site. Cystine bridges form between Cys-6/Cys-14, Cys-16/Cys-28, and Cys-22/Cys-39. Residues 39-66 (CVTGEGTPKPQSHNQGDFEPIPEDAYDE) are disordered. An O-linked (GalNAc...) threonine glycan is attached at Thr-45. The tract at residues 55-66 (DFEPIPEDAYDE) is interaction with fibrinogen-binding exosite of thrombin. Residue Tyr-64 is modified to Sulfotyrosine.

Belongs to the protease inhibitor I14 (hirudin) family.

The protein resides in the secreted. In terms of biological role, hirudin is a potent thrombin-specific protease inhibitor. It forms a stable non-covalent complex with alpha-thrombin, thereby abolishing its ability to cleave fibrinogen. In Hirudo medicinalis (Medicinal leech), this protein is Hirudin-PA.